A 523-amino-acid chain; its full sequence is MDKELAEKVEKRRTFAIISHPDAGKTTITEQMLLFGGVIRKAGTVKARKTGNFATSDWMEIEKKRGISVTSSVMQFEYKGKRINILDTPGHQDFSEDTYRTLMAVDSAVMVIDSAKGIEPQTKKLFKVVKQRGIPIFTFMNKLDRDGRPPLDLIAELEDLLGIEGVAMNWPIGSGQTLKGLYDIANNRVELYRKDGEDRFLPLNDDGTLPDSEALSQDPQFKDTLDEIELIKEAGNKFNREKIAMGDQTPVFFGSALTNFGVETFLNSFVDLAPAPESHTVNEDEELSPEDPEFSGFVFKIQANMNPNHRDRIAFVRIGSGEFKKGLDVTLARTGKPIRLNNATEFMSSERVQVSDAVAGDIVGLYDTGNFQIGDSIYSGKRKIVYPALPEFTPELFMRVTAKNVMKQKSFHKGMNQLVQEGAIQLYRNYQTDEYILGAVGQLQFEVFQFRMKNEYNSEVEMNSIGHRVARWIDPEQLDPQMSNSRNLLVKDRYGNPLFLFENEFAERFFRDKYPDIKLTEKL.

The 268-residue stretch at 10 to 277 (EKRRTFAIIS…SFVDLAPAPE (268 aa)) folds into the tr-type G domain. Residues 19–26 (SHPDAGKT), 87–91 (DTPGH), and 141–144 (NKLD) contribute to the GTP site.

This sequence belongs to the TRAFAC class translation factor GTPase superfamily. Classic translation factor GTPase family. PrfC subfamily.

Its subcellular location is the cytoplasm. In terms of biological role, increases the formation of ribosomal termination complexes and stimulates activities of RF-1 and RF-2. It binds guanine nucleotides and has strong preference for UGA stop codons. It may interact directly with the ribosome. The stimulation of RF-1 and RF-2 is significantly reduced by GTP and GDP, but not by GMP. This Lactobacillus acidophilus (strain ATCC 700396 / NCK56 / N2 / NCFM) protein is Peptide chain release factor 3.